Consider the following 148-residue polypeptide: Large ribosomal subunit protein bL9 (148 aa).

It belongs to the bacterial ribosomal protein bL9 family.

In terms of biological role, binds to the 23S rRNA. In Alkaliphilus oremlandii (strain OhILAs) (Clostridium oremlandii (strain OhILAs)), this protein is Large ribosomal subunit protein bL9.